The sequence spans 139 residues: Bilirubin-inducible fluorescent protein UnaG (139 aa).

Residues asparagine 57, threonine 61, serine 80, arginine 112, and 132-134 (RSY) each bind (4Z,15Z)-bilirubin IXalpha.

This sequence belongs to the calycin superfamily. Fatty-acid binding protein (FABP) family. In terms of assembly, monomer. In terms of tissue distribution, detected in small-diameter muscle fibers from the white muscle layer from juvenile animals (glass eels) (at protein level). Detected in small-diameter muscle fibers from juvenile animals (glass eels).

It is found in the cytoplasm. Functionally, beta-barrel protein that binds unconjugated bilirubin with high affinity. Excitation of the bilirubin-bound protein gives rise to green fluorescence, both under normoxia and hypoxia. The apoprotein is not fluorescent. Does not emit fluorescence in the presence of ditauro-bilirubin, urobilin or biliverdin. The polypeptide is Bilirubin-inducible fluorescent protein UnaG (Anguilla japonica (Japanese eel)).